A 332-amino-acid polypeptide reads, in one-letter code: NADH-quinone oxidoreductase subunit H (332 aa).

Transmembrane regions (helical) follow at residues 4 to 24 (FAFF…IFAS), 44 to 64 (IGPD…MIKL), 78 to 98 (FIFA…LAAI), 120 to 140 (VALL…FLGG), 165 to 185 (VGAL…LVDI), 194 to 214 (FSWL…ALFI), 255 to 275 (IAGA…FWII), 279 to 299 (IMMI…RAAF), and 312 to 332 (YLIL…TVLL).

It belongs to the complex I subunit 1 family. In terms of assembly, NDH-1 is composed of 14 different subunits. Subunits NuoA, H, J, K, L, M, N constitute the membrane sector of the complex.

The protein resides in the cell inner membrane. The enzyme catalyses a quinone + NADH + 5 H(+)(in) = a quinol + NAD(+) + 4 H(+)(out). NDH-1 shuttles electrons from NADH, via FMN and iron-sulfur (Fe-S) centers, to quinones in the respiratory chain. The immediate electron acceptor for the enzyme in this species is believed to be ubiquinone. Couples the redox reaction to proton translocation (for every two electrons transferred, four hydrogen ions are translocated across the cytoplasmic membrane), and thus conserves the redox energy in a proton gradient. This subunit may bind ubiquinone. This chain is NADH-quinone oxidoreductase subunit H, found in Campylobacter jejuni subsp. jejuni serotype O:2 (strain ATCC 700819 / NCTC 11168).